Here is a 475-residue protein sequence, read N- to C-terminus: Ataxin-10 (475 aa).

R10 bears the Omega-N-methylarginine mark. 2 positions are modified to phosphoserine: S12 and S77. T82 carries the post-translational modification Phosphothreonine. S430 is subject to Phosphoserine.

The protein belongs to the ataxin-10 family. As to quaternary structure, homooligomer. Interacts with GNB2. Interacts with IQCB1. Interacts with OGT. Post-translationally, polyubiquitinated. Phosphorylation at Ser-12 by AURKB promotes the association of ATXN10 with PLK1. Phosphorylation at Ser-77 and Thr-82 by PLK1 may play a role in the regulation of cytokinesis and may stimulate the proteasome-mediated degradation of ATXN10.

Its subcellular location is the cytoplasm. It localises to the perinuclear region. The protein localises to the midbody. It is found in the cytoskeleton. The protein resides in the cilium basal body. Its subcellular location is the microtubule organizing center. It localises to the centrosome. The protein localises to the centriole. Functionally, may play a role in the regulation of cytokinesis. May play a role in signaling by stimulating protein glycosylation. Induces neuritogenesis by activating the Ras-MAP kinase pathway and is necessary for the survival of cerebellar neurons. Does not appear to play a major role in ciliogenesis. This chain is Ataxin-10 (ATXN10), found in Macaca fascicularis (Crab-eating macaque).